A 273-amino-acid polypeptide reads, in one-letter code: Dermonecrotic toxin LapSicTox-alphaIB2 (273 aa).

His-5 is a catalytic residue. Residues Glu-25 and Asp-27 each contribute to the Mg(2+) site. The active-site Nucleophile is the His-41. Cystine bridges form between Cys-45–Cys-51 and Cys-47–Cys-190. Position 85 (Asp-85) interacts with Mg(2+). N-linked (GlcNAc...) asparagine glycosylation occurs at Asn-250.

It belongs to the arthropod phospholipase D family. Class II subfamily. The cofactor is Mg(2+). Expressed by the venom gland.

The protein localises to the secreted. The enzyme catalyses an N-(acyl)-sphingosylphosphocholine = an N-(acyl)-sphingosyl-1,3-cyclic phosphate + choline. It catalyses the reaction an N-(acyl)-sphingosylphosphoethanolamine = an N-(acyl)-sphingosyl-1,3-cyclic phosphate + ethanolamine. It carries out the reaction a 1-acyl-sn-glycero-3-phosphocholine = a 1-acyl-sn-glycero-2,3-cyclic phosphate + choline. The catalysed reaction is a 1-acyl-sn-glycero-3-phosphoethanolamine = a 1-acyl-sn-glycero-2,3-cyclic phosphate + ethanolamine. Its function is as follows. Dermonecrotic toxins cleave the phosphodiester linkage between the phosphate and headgroup of certain phospholipids (sphingolipid and lysolipid substrates), forming an alcohol (often choline) and a cyclic phosphate. This toxin acts on sphingomyelin (SM). It may also act on ceramide phosphoethanolamine (CPE), lysophosphatidylcholine (LPC) and lysophosphatidylethanolamine (LPE), but not on lysophosphatidylserine (LPS), and lysophosphatidylglycerol (LPG). It acts by transphosphatidylation, releasing exclusively cyclic phosphate products as second products. Induces dermonecrosis, hemolysis, increased vascular permeability, edema, inflammatory response, and platelet aggregation. In Loxosceles apachea (Apache recluse spider), this protein is Dermonecrotic toxin LapSicTox-alphaIB2.